A 259-amino-acid polypeptide reads, in one-letter code: Hydroxyethylthiazole kinase (259 aa).

Position 50 (M50) interacts with substrate. ATP is bound by residues R122 and T168. G195 is a substrate binding site.

The protein belongs to the Thz kinase family. The cofactor is Mg(2+).

It carries out the reaction 5-(2-hydroxyethyl)-4-methylthiazole + ATP = 4-methyl-5-(2-phosphooxyethyl)-thiazole + ADP + H(+). It participates in cofactor biosynthesis; thiamine diphosphate biosynthesis; 4-methyl-5-(2-phosphoethyl)-thiazole from 5-(2-hydroxyethyl)-4-methylthiazole: step 1/1. In terms of biological role, catalyzes the phosphorylation of the hydroxyl group of 4-methyl-5-beta-hydroxyethylthiazole (THZ). The sequence is that of Hydroxyethylthiazole kinase from Escherichia coli O127:H6 (strain E2348/69 / EPEC).